The sequence spans 431 residues: Adenylosuccinate synthetase (431 aa).

GTP is bound by residues 12–18 and 40–42; these read GDEGKGK and GHT. The active-site Proton acceptor is Asp13. Mg(2+) is bound by residues Asp13 and Gly40. Residues 13–16, 38–41, Thr129, Arg143, Gln224, and Thr239 contribute to the IMP site; these read DEGK and NAGH. The active-site Proton donor is the His41. Residue Lys292 forms an Isoglutamyl lysine isopeptide (Lys-Gln) (interchain with Q-Cter in protein Pup) linkage. Residue 299–305 participates in substrate binding; that stretch reads VTTGRAR. Arg303 is an IMP binding site. Residues Arg305, 331–333, and 413–415 each bind GTP; these read KLD and GVG.

Belongs to the adenylosuccinate synthetase family. As to quaternary structure, homodimer. Mg(2+) is required as a cofactor.

The protein resides in the cytoplasm. It catalyses the reaction IMP + L-aspartate + GTP = N(6)-(1,2-dicarboxyethyl)-AMP + GDP + phosphate + 2 H(+). The protein operates within purine metabolism; AMP biosynthesis via de novo pathway; AMP from IMP: step 1/2. Its function is as follows. Plays an important role in the de novo pathway of purine nucleotide biosynthesis. Catalyzes the first committed step in the biosynthesis of AMP from IMP. This chain is Adenylosuccinate synthetase, found in Mycolicibacterium smegmatis (strain ATCC 700084 / mc(2)155) (Mycobacterium smegmatis).